Consider the following 156-residue polypeptide: Guanine deaminase (156 aa).

A CMP/dCMP-type deaminase domain is found at 1–132 (MNHETFLKRA…KPAEERTIPF (132 aa)). Zn(2+) is bound at residue H53. The active-site Proton donor is E55. Zn(2+) contacts are provided by C83 and C86.

This sequence belongs to the cytidine and deoxycytidylate deaminase family. Zn(2+) serves as cofactor.

It carries out the reaction guanine + H2O + H(+) = xanthine + NH4(+). The protein operates within purine metabolism; guanine degradation; xanthine from guanine: step 1/1. Catalyzes the hydrolytic deamination of guanine, producing xanthine and ammonia. This is Guanine deaminase (guaD) from Bacillus subtilis (strain 168).